We begin with the raw amino-acid sequence, 436 residues long: Adenosylmethionine-8-amino-7-oxononanoate aminotransferase (436 aa).

Tryptophan 56 is a binding site for substrate. 114–115 contributes to the pyridoxal 5'-phosphate binding site; it reads GS. Tyrosine 148 contacts substrate. Aspartate 245 lines the pyridoxal 5'-phosphate pocket. Lysine 274, serine 309, and arginine 400 together coordinate substrate. N6-(pyridoxal phosphate)lysine is present on lysine 274.

Belongs to the class-III pyridoxal-phosphate-dependent aminotransferase family. BioA subfamily. In terms of assembly, homodimer. The cofactor is pyridoxal 5'-phosphate.

Its subcellular location is the cytoplasm. The catalysed reaction is (8S)-8-amino-7-oxononanoate + S-adenosyl-L-methionine = S-adenosyl-4-methylsulfanyl-2-oxobutanoate + (7R,8S)-7,8-diammoniononanoate. It participates in cofactor biosynthesis; biotin biosynthesis; 7,8-diaminononanoate from 8-amino-7-oxononanoate (SAM route): step 1/1. In terms of biological role, catalyzes the transfer of the alpha-amino group from S-adenosyl-L-methionine (SAM) to 7-keto-8-aminopelargonic acid (KAPA) to form 7,8-diaminopelargonic acid (DAPA). It is the only aminotransferase known to utilize SAM as an amino donor. This is Adenosylmethionine-8-amino-7-oxononanoate aminotransferase from Helicobacter pylori (strain ATCC 700392 / 26695) (Campylobacter pylori).